The sequence spans 569 residues: Urease subunit beta (569 aa).

The 439-residue stretch at 131-569 (GGIDTHIHFI…VSLAQLFSIF (439 aa)) folds into the Urease domain. Ni(2+) contacts are provided by His-136, His-138, and Lys-219. N6-carboxylysine is present on Lys-219. His-221 lines the substrate pocket. Residues His-248 and His-274 each contribute to the Ni(2+) site. Catalysis depends on His-322, which acts as the Proton donor. Residue Asp-362 coordinates Ni(2+).

The protein belongs to the metallo-dependent hydrolases superfamily. Urease alpha subunit family. As to quaternary structure, heterohexamer of 3 UreA (alpha) and 3 UreB (beta) subunits. Ni cation is required as a cofactor. Carboxylation allows a single lysine to coordinate two nickel ions.

It is found in the cytoplasm. The catalysed reaction is urea + 2 H2O + H(+) = hydrogencarbonate + 2 NH4(+). Its pathway is nitrogen metabolism; urea degradation; CO(2) and NH(3) from urea (urease route): step 1/1. This chain is Urease subunit beta, found in Helicobacter pylori (strain P12).